The chain runs to 327 residues: Biotin synthase (327 aa).

Residues 51 to 278 (QTIQLSTLMS…KSYVRLSAGR (228 aa)) form the Radical SAM core domain. The [4Fe-4S] cluster site is built by cysteine 66, cysteine 70, and cysteine 73. Cysteine 110, cysteine 141, cysteine 201, and arginine 273 together coordinate [2Fe-2S] cluster.

It belongs to the radical SAM superfamily. Biotin synthase family. As to quaternary structure, homodimer. It depends on [4Fe-4S] cluster as a cofactor. Requires [2Fe-2S] cluster as cofactor.

The catalysed reaction is (4R,5S)-dethiobiotin + (sulfur carrier)-SH + 2 reduced [2Fe-2S]-[ferredoxin] + 2 S-adenosyl-L-methionine = (sulfur carrier)-H + biotin + 2 5'-deoxyadenosine + 2 L-methionine + 2 oxidized [2Fe-2S]-[ferredoxin]. It participates in cofactor biosynthesis; biotin biosynthesis; biotin from 7,8-diaminononanoate: step 2/2. Catalyzes the conversion of dethiobiotin (DTB) to biotin by the insertion of a sulfur atom into dethiobiotin via a radical-based mechanism. This chain is Biotin synthase, found in Histophilus somni (strain 2336) (Haemophilus somnus).